The following is a 314-amino-acid chain: Olfactory receptor 5F1 (314 aa).

The Extracellular segment spans residues 1–25 (MTRKNYTSLTEFVLLGLADTLELQI). N5 is a glycosylation site (N-linked (GlcNAc...) asparagine). The chain crosses the membrane as a helical span at residues 26–46 (ILFLFFLVIYTLTVLGNLGMI). Residues 47 to 54 (LLIRIDSQ) are Cytoplasmic-facing. Residues 55-75 (LHTPMYFFLANLSFVDVCNST) traverse the membrane as a helical segment. Residues 76–99 (TITPKMLADLLSEKKTISFAGCFL) lie on the Extracellular side of the membrane. Cysteines 97 and 189 form a disulfide. The helical transmembrane segment at 100 to 120 (QMYFFISLATTECILFGLMAY) threads the bilayer. The Cytoplasmic portion of the chain corresponds to 121 to 139 (DRYAAICRPLLYSLIMSRT). Residues 140-160 (VYLKMAAGAFAAGLLNFMVNT) traverse the membrane as a helical segment. At 161–196 (SHVSSLSFCDSNVIHHFFCDSPPLFKLSCSDTILKE) the chain is on the extracellular side. The chain crosses the membrane as a helical span at residues 197–217 (SISSILAGVNIVGTLLVILSS). The Cytoplasmic segment spans residues 218 to 237 (YSYVLFSIFSMHSGEGRHRA). Residues 238–258 (FSTCASHLTAIILFYATCIYT) form a helical membrane-spanning segment. The Extracellular segment spans residues 259-271 (YLRPSSSYSLNQD). Residues 272–292 (KVASVFYTVVIPMLNPLIYSL) form a helical membrane-spanning segment. Topologically, residues 293–314 (RSKEVKKALANVISRKRTSSFL) are cytoplasmic.

Belongs to the G-protein coupled receptor 1 family.

Its subcellular location is the cell membrane. Its function is as follows. Odorant receptor. In Homo sapiens (Human), this protein is Olfactory receptor 5F1 (OR5F1).